Reading from the N-terminus, the 364-residue chain is Probable G-protein coupled receptor AH9.4 (364 aa).

Methionine 1 is a topological domain (extracellular). A helical membrane pass occupies residues alanine 2–leucine 22. Residues asparagine 23–proline 48 lie on the Cytoplasmic side of the membrane. A helical membrane pass occupies residues leucine 49–phenylalanine 69. Over histidine 70 to glycine 89 the chain is Extracellular. A helical membrane pass occupies residues isoleucine 90–leucine 110. Residues arginine 111–asparagine 130 are Cytoplasmic-facing. The chain crosses the membrane as a helical span at residues alanine 131–threonine 151. The Extracellular portion of the chain corresponds to tyrosine 152 to aspartate 177. A helical transmembrane segment spans residues isoleucine 178 to isoleucine 198. Residues histidine 199–serine 277 lie on the Cytoplasmic side of the membrane. The helical transmembrane segment at isoleucine 278 to alanine 298 threads the bilayer. At serine 299–proline 315 the chain is on the extracellular side. Residues isoleucine 316–isoleucine 336 form a helical membrane-spanning segment. Over tyrosine 337–alanine 364 the chain is Cytoplasmic.

Belongs to the G-protein coupled receptor 1 family.

The protein localises to the cell membrane. Not known. Putative receptor. The sequence is that of Probable G-protein coupled receptor AH9.4 from Caenorhabditis elegans.